Consider the following 152-residue polypeptide: Sec-independent protein translocase protein TatB (152 aa).

A helical transmembrane segment spans residues 1-21 (MFDLGWSELLVIGVVALIVVG).

It belongs to the TatB family. The Tat system comprises two distinct complexes: a TatABC complex, containing multiple copies of TatA, TatB and TatC subunits, and a separate TatA complex, containing only TatA subunits. Substrates initially bind to the TatABC complex, which probably triggers association of the separate TatA complex to form the active translocon.

The protein resides in the cell inner membrane. Part of the twin-arginine translocation (Tat) system that transports large folded proteins containing a characteristic twin-arginine motif in their signal peptide across membranes. Together with TatC, TatB is part of a receptor directly interacting with Tat signal peptides. TatB may form an oligomeric binding site that transiently accommodates folded Tat precursor proteins before their translocation. The protein is Sec-independent protein translocase protein TatB of Ruegeria pomeroyi (strain ATCC 700808 / DSM 15171 / DSS-3) (Silicibacter pomeroyi).